Here is a 160-residue protein sequence, read N- to C-terminus: Phosphopantetheine adenylyltransferase (160 aa).

Thr11 contacts substrate. ATP contacts are provided by residues 11-12 and His19; that span reads TF. Substrate is bound by residues Lys43, Thr75, and Arg89. ATP contacts are provided by residues 90-92, Glu100, and 125-131; these read GLR and YSFLSSS.

Belongs to the bacterial CoaD family. As to quaternary structure, homohexamer. Mg(2+) is required as a cofactor.

The protein resides in the cytoplasm. The enzyme catalyses (R)-4'-phosphopantetheine + ATP + H(+) = 3'-dephospho-CoA + diphosphate. It participates in cofactor biosynthesis; coenzyme A biosynthesis; CoA from (R)-pantothenate: step 4/5. In terms of biological role, reversibly transfers an adenylyl group from ATP to 4'-phosphopantetheine, yielding dephospho-CoA (dPCoA) and pyrophosphate. This is Phosphopantetheine adenylyltransferase from Listeria monocytogenes serovar 1/2a (strain ATCC BAA-679 / EGD-e).